We begin with the raw amino-acid sequence, 124 residues long: S-adenosylmethionine decarboxylase proenzyme (124 aa).

Ser71 functions as the Schiff-base intermediate with substrate; via pyruvic acid in the catalytic mechanism. A Pyruvic acid (Ser); by autocatalysis modification is found at Ser71. The Proton acceptor; for processing activity role is filled by His76. Catalysis depends on Cys91, which acts as the Proton donor; for catalytic activity.

Belongs to the prokaryotic AdoMetDC family. Type 1 subfamily. In terms of assembly, heterotetramer of two alpha and two beta chains arranged as a dimer of alpha/beta heterodimers. It depends on pyruvate as a cofactor. Is synthesized initially as an inactive proenzyme. Formation of the active enzyme involves a self-maturation process in which the active site pyruvoyl group is generated from an internal serine residue via an autocatalytic post-translational modification. Two non-identical subunits are generated from the proenzyme in this reaction, and the pyruvate is formed at the N-terminus of the alpha chain, which is derived from the carboxyl end of the proenzyme. The post-translation cleavage follows an unusual pathway, termed non-hydrolytic serinolysis, in which the side chain hydroxyl group of the serine supplies its oxygen atom to form the C-terminus of the beta chain, while the remainder of the serine residue undergoes an oxidative deamination to produce ammonia and the pyruvoyl group blocking the N-terminus of the alpha chain.

The catalysed reaction is S-adenosyl-L-methionine + H(+) = S-adenosyl 3-(methylsulfanyl)propylamine + CO2. It functions in the pathway amine and polyamine biosynthesis; S-adenosylmethioninamine biosynthesis; S-adenosylmethioninamine from S-adenosyl-L-methionine: step 1/1. Competitively inhibited by methylglyoxal bis-guanylhydrazone. Irreversibly inhibited by NaBH(4) in vitro. Its function is as follows. Catalyzes the decarboxylation of S-adenosylmethionine to S-adenosylmethioninamine (dcAdoMet), the propylamine donor required for the synthesis of the polyamines spermine and spermidine from the diamine putrescine. Has no arginine decarboxylase (ArgDC) activity. This chain is S-adenosylmethionine decarboxylase proenzyme (speH), found in Saccharolobus solfataricus (strain ATCC 35092 / DSM 1617 / JCM 11322 / P2) (Sulfolobus solfataricus).